Reading from the N-terminus, the 509-residue chain is Histone deacetylase 2 (509 aa).

The histone deacetylase stretch occupies residues 24–338 (RRVCYFYDPE…WCYETGVALG (315 aa)). His-158 (proton donor/acceptor) is an active-site residue. Zn(2+) is bound by residues Asp-193, His-195, and Asp-281. The disordered stretch occupies residues 394 to 509 (PSVQFEERIP…NAKNEPGSSL (116 aa)). 3 stretches are compositionally biased toward basic and acidic residues: residues 398–409 (FEERIPETKLPE), 418–434 (DERH…DHKP), and 448–472 (VKRE…HKVP). Polar residues predominate over residues 481–494 (SSKQVPTADANSMA).

It belongs to the histone deacetylase family. HD Type 1 subfamily. The cofactor is Zn(2+). Expressed in roots.

It localises to the nucleus. It carries out the reaction N(6)-acetyl-L-lysyl-[histone] + H2O = L-lysyl-[histone] + acetate. Functionally, responsible for the deacetylation of lysine residues on the N-terminal part of the core histones (H2A, H2B, H3 and H4). Histone deacetylation gives a tag for epigenetic repression and plays an important role in transcriptional regulation, cell cycle progression and developmental events. Histone deacetylases act via the formation of large multiprotein complexes. The polypeptide is Histone deacetylase 2 (Oryza sativa subsp. japonica (Rice)).